A 61-amino-acid chain; its full sequence is Copper metallothionein 1-1 (61 aa).

The propeptide occupies 1–8; the sequence is MFSELINF. Residues cysteine 15, cysteine 17, cysteine 19, cysteine 22, and cysteine 28 each coordinate Cu cation. Lysine 30 participates in a covalent cross-link: Glycyl lysine isopeptide (Lys-Gly) (interchain with G-Cter in ubiquitin). Cysteine 32, cysteine 34, cysteine 38, cysteine 44, and cysteine 46 together coordinate Cu cation. The disordered stretch occupies residues 37–61; the sequence is GCNSDDKCPCGNKSEETKKSCCSGK. Residues 40–55 are compositionally biased toward basic and acidic residues; that stretch reads SDDKCPCGNKSEETKK.

This sequence belongs to the metallothionein superfamily. Type 12 family.

In terms of biological role, protects the cell against copper toxicity by tightly chelating copper ions. May also act as a depository for copper designated for the effective transfer into the apo forms of copper proteins. The protein is Copper metallothionein 1-1 (CUP1-1) of Saccharomyces cerevisiae (strain ATCC 204508 / S288c) (Baker's yeast).